We begin with the raw amino-acid sequence, 155 residues long: Aspartate carbamoyltransferase regulatory chain (155 aa).

Residues Cys-110, Cys-115, Cys-139, and Cys-142 each contribute to the Zn(2+) site.

This sequence belongs to the PyrI family. As to quaternary structure, contains catalytic and regulatory chains. The cofactor is Zn(2+).

In terms of biological role, involved in allosteric regulation of aspartate carbamoyltransferase. This chain is Aspartate carbamoyltransferase regulatory chain, found in Yersinia pestis bv. Antiqua (strain Antiqua).